The chain runs to 460 residues: ERAD-associated E3 ubiquitin-protein ligase HRD1B (460 aa).

The Cytoplasmic segment spans residues 1–3 (MIQ). The helical transmembrane segment at 4 to 24 (LKVYAGLSTLATLVVIYHAFS) threads the bilayer. The Lumenal portion of the chain corresponds to 25-40 (SRGQFYPATVYLSTSK). Residues 41–61 (INLVVLLNMGLVLMLSLWNLV) traverse the membrane as a helical segment. At 62-98 (KIVFLGSLREAEVERLNEQAWRELMEILFAITIFRQD) the chain is on the cytoplasmic side. The chain crosses the membrane as a helical span at residues 99 to 119 (FSVGFISLVVTLLLIKGLHWM). Over 120 to 140 (AQKRVEYIETTPSVTLLSHVR) the chain is Lumenal. A helical membrane pass occupies residues 141-161 (IVSFMVFLLILDCLLTYSSIQ). At 162-170 (QLIQSRKAS) the chain is on the cytoplasmic side. A helical transmembrane segment spans residues 171-191 (MSVFFTFEYMILATTTVSIIV). At 192-225 (KYAFYVTDMLKEGQWEGKPVYTFYLELVRDLLHL) the chain is on the lumenal side. A helical transmembrane segment spans residues 226 to 246 (SMYLCFFLMIFMNYGLPLHLI). The Cytoplasmic segment spans residues 247–460 (RELYETFRNF…TKGKSVADTA (214 aa)). An RING-type; atypical zinc finger spans residues 292-330 (CIICREEMTSAKKLVCGHLFHVHCLRSWLERQNTCPTCR). The segment at 339–378 (ATSTASGNRGPHQESLQQGTGTSSSDGQGSSVSAAASENM) is disordered. Positions 353–375 (SLQQGTGTSSSDGQGSSVSAAAS) are enriched in low complexity.

Belongs to the HRD1 family.

It is found in the endoplasmic reticulum membrane. It catalyses the reaction S-ubiquitinyl-[E2 ubiquitin-conjugating enzyme]-L-cysteine + [acceptor protein]-L-lysine = [E2 ubiquitin-conjugating enzyme]-L-cysteine + N(6)-ubiquitinyl-[acceptor protein]-L-lysine.. The protein operates within protein modification; protein ubiquitination. Its function is as follows. Probable component of the HRD1 ubiquitin ligase complex that mediates the rapid degradation of misfolded endoplasmic reticulum (ER) proteins, a process called ER-associated degradation (ERAD). Targets the misfolded LRR receptor kinase BRI1. Functions redundantly with HRD3A. The protein is ERAD-associated E3 ubiquitin-protein ligase HRD1B of Arabidopsis thaliana (Mouse-ear cress).